Consider the following 274-residue polypeptide: Momilactone A synthase (274 aa).

It belongs to the short-chain dehydrogenases/reductases (SDR) family.

The enzyme catalyses 3beta-hydroxy-9beta-pimara-7,15-dien-19,6beta-olide + NAD(+) = momilactone A + NADH + H(+). It carries out the reaction 3beta-hydroxy-9beta-pimara-7,15-dien-19,6beta-olide + NADP(+) = momilactone A + NADPH + H(+). Involved in momilactone phytoalexins biosynthesis. Catalyzes the last step of momilactone A biosynthesis. The protein is Momilactone A synthase of Oryza sativa subsp. japonica (Rice).